A 663-amino-acid chain; its full sequence is DNA ligase 1 (663 aa).

Residues 30–34 and 78–79 each bind NAD(+); these read DAEYD and SL. Catalysis depends on K105, which acts as the N6-AMP-lysine intermediate. NAD(+)-binding residues include R126, E161, and K294. 4 residues coordinate Zn(2+): C389, C392, C407, and C412. The BRCT domain occupies 574–663; sequence AAGAPLAGKT…WAQLIEAKLV (90 aa).

This sequence belongs to the NAD-dependent DNA ligase family. LigA subfamily. It depends on Mg(2+) as a cofactor. Mn(2+) serves as cofactor.

It carries out the reaction NAD(+) + (deoxyribonucleotide)n-3'-hydroxyl + 5'-phospho-(deoxyribonucleotide)m = (deoxyribonucleotide)n+m + AMP + beta-nicotinamide D-nucleotide.. Functionally, DNA ligase that catalyzes the formation of phosphodiester linkages between 5'-phosphoryl and 3'-hydroxyl groups in double-stranded DNA using NAD as a coenzyme and as the energy source for the reaction. It is essential for DNA replication and repair of damaged DNA. The sequence is that of DNA ligase 1 from Nocardia farcinica (strain IFM 10152).